Reading from the N-terminus, the 643-residue chain is Extracellular metalloproteinase 4 (643 aa).

The first 18 residues, 1-18 (MHGLMLAGLLALPLSVLG), serve as a signal peptide directing secretion. A propeptide spanning residues 19-254 (HPTESHSSGI…VHSVVDYVSA (236 aa)) is cleaved from the precursor. A compositionally biased stretch (basic and acidic residues) spans 47–57 (TKSDAVPKQDG). The disordered stretch occupies residues 47 to 73 (TKSDAVPKQDGESFTTSSTGNDNSSSG). The segment covering 61–73 (TTSSTGNDNSSSG) has biased composition (low complexity). Asparagine 271 and asparagine 420 each carry an N-linked (GlcNAc...) asparagine glycan. Histidine 437 is a Zn(2+) binding site. The active site involves glutamate 438. A Zn(2+)-binding site is contributed by histidine 441. N-linked (GlcNAc...) asparagine glycosylation is found at asparagine 603 and asparagine 629.

Belongs to the peptidase M36 family. It depends on Zn(2+) as a cofactor.

Its subcellular location is the secreted. Functionally, secreted metalloproteinase probably acting as a virulence factor. The chain is Extracellular metalloproteinase 4 (MEP4) from Trichophyton rubrum (Athlete's foot fungus).